Consider the following 595-residue polypeptide: Threonine dehydratase 2 biosynthetic, chloroplastic (595 aa).

A chloroplast-targeting transit peptide spans 1–51 (MEFLCLAPTRSFSTNPKLTKSIPSDHTSTTSRIFTYQNMRGSTMRPLALPL). Lys143 carries the post-translational modification N6-(pyridoxal phosphate)lysine. ACT-like domains lie at 420-492 (ALLA…NLSH) and 514-585 (IFGE…LDNY).

This sequence belongs to the serine/threonine dehydratase family. As to quaternary structure, homotetramer. It depends on pyridoxal 5'-phosphate as a cofactor. Post-translationally, proteolytically cleaved by a chymotrypsin-like digestive protease in the midgut of the lepidopteran insects to remove the C-terminal regulatory domain, which allows efficient metabolizing of threonine in the presence of high isoleucine levels in the gut. In terms of tissue distribution, expressed in floral buds, 8-9 mm long flowers 1 to 2 days before anthesis, open flowers and floral organs including sepals, petals, stamens and carpels of 8-9 mm flowers (at protein level). Expressed in very early floral meristems of the anantha. Over 500-fold expression in mature flowers compared to leaves. Expressed in sepals, petals, stamens and carpels of the mature flower. In sepals, mostly expressed in the abaxial mesophyll cells and in petals in parenchymal cells. Not expressed in epidermal or vascular tissues of sepals and petals. In stamens, expressed in parenchymal cells of the connective and lobes, but not expressed in differentiated tissues such as tapetum (TP), stomium (SM), or pollen grains (PG). Not expressed in roots or seeds. High level of expression in immature flower buds, unopened flowers and opened flowers. Not expressed in unstressed leaves, root, stem or petiole.

Its subcellular location is the plastid. The protein localises to the chloroplast. It catalyses the reaction L-threonine = 2-oxobutanoate + NH4(+). It carries out the reaction L-serine = pyruvate + NH4(+). It participates in amino-acid biosynthesis; L-isoleucine biosynthesis; 2-oxobutanoate from L-threonine: step 1/1. With respect to regulation, threonine dehydratase 2 biosynthetic, chloroplastic: Strongly inhibited by 1 mM isoleucine. Processed threonine dehydratase 2: Not inhibited by isoleucine. In terms of biological role, not required for normal growth and development of the plant. Involved in defense against lepidopteran, but not coleopteran herbivore insects. Acts in the insect gut to degrade threonine, which is an essential and limiting nutrient for the growth of lepidopteran larvae. Active against both L-threonine and L-serine. The chain is Threonine dehydratase 2 biosynthetic, chloroplastic from Solanum lycopersicum (Tomato).